The sequence spans 382 residues: Alanine racemase (382 aa).

Lys-37 functions as the Proton acceptor; specific for D-alanine in the catalytic mechanism. The residue at position 37 (Lys-37) is an N6-(pyridoxal phosphate)lysine. Arg-135 is a substrate binding site. Tyr-267 serves as the catalytic Proton acceptor; specific for L-alanine. Met-315 is a binding site for substrate.

This sequence belongs to the alanine racemase family. Requires pyridoxal 5'-phosphate as cofactor.

The enzyme catalyses L-alanine = D-alanine. It functions in the pathway amino-acid biosynthesis; D-alanine biosynthesis; D-alanine from L-alanine: step 1/1. Catalyzes the interconversion of L-alanine and D-alanine. May also act on other amino acids. This Geobacter sulfurreducens (strain ATCC 51573 / DSM 12127 / PCA) protein is Alanine racemase (alr).